The primary structure comprises 196 residues: Nucleoid occlusion factor SlmA (196 aa).

The region spanning 7–68 (PNRRDEILQA…GLIEFIEESI (62 aa)) is the HTH tetR-type domain. Residues 31 to 50 (TTAKLAKQVGVSEAALYRHF) constitute a DNA-binding region (H-T-H motif). Residues 71 to 93 (RVNRILEDEKDTLKRIELLLKLL) are a coiled coil.

The protein belongs to the nucleoid occlusion factor SlmA family. As to quaternary structure, homodimer. Interacts with FtsZ.

Its subcellular location is the cytoplasm. The protein resides in the nucleoid. Required for nucleoid occlusion (NO) phenomenon, which prevents Z-ring formation and cell division over the nucleoid. Acts as a DNA-associated cell division inhibitor that binds simultaneously chromosomal DNA and FtsZ, and disrupts the assembly of FtsZ polymers. SlmA-DNA-binding sequences (SBS) are dispersed on non-Ter regions of the chromosome, preventing FtsZ polymerization at these regions. The chain is Nucleoid occlusion factor SlmA from Aliivibrio fischeri (strain MJ11) (Vibrio fischeri).